The following is a 552-amino-acid chain: Cycloheximide resistance protein (552 aa).

Residues Val-46–Gln-70 form a disordered region. A compositionally biased stretch (polar residues) spans Leu-47–Ser-56. 12 consecutive transmembrane segments (helical) span residues Ala-100–Tyr-120, Leu-137–Ser-157, Thr-168–Ser-188, Leu-194–Gly-213, Tyr-225–Ile-246, Trp-262–Leu-282, Ile-346–Val-362, Tyr-381–Val-399, Leu-419–Thr-439, Asn-445–Phe-464, Val-477–Ser-494, and Trp-518–Leu-539.

Belongs to the major facilitator superfamily. CAR1 family.

The protein localises to the membrane. Functionally, probable transporter. Confers resistance to cycloheximide. The sequence is that of Cycloheximide resistance protein (CYHR) from Candida maltosa (Yeast).